A 667-amino-acid polypeptide reads, in one-letter code: Acyl-coenzyme A oxidase acox-3 (667 aa).

Residues 138–141 (FCLT), 146–147 (GS), Gly-178, Arg-313, 334–337 (QQYR), and Gly-410 contribute to the FAD site. Glu-433 (proton acceptor) is an active-site residue. Residue Glu-435 coordinates FAD. The Microbody targeting signal signature appears at 665-667 (SKL).

The protein belongs to the acyl-CoA oxidase family. As to quaternary structure, homodimer. FAD is required as a cofactor. Expressed in intestine.

The protein resides in the peroxisome. The enzyme catalyses IC-asc-C7-CoA + O2 = IC-asc-DeltaC7-CoA + H2O2. It catalyses the reaction IC-asc-C9-CoA + O2 = IC-asc-DeltaC9-CoA + H2O2. It carries out the reaction asc-C13-CoA + O2 = asc-DeltaC13-CoA + H2O2. The protein operates within lipid metabolism; peroxisomal fatty acid beta-oxidation. With respect to regulation, in contrast to other acyl-coenzyme A oxidases which bind to and are activated by ATP, does not bind ATP. Its function is as follows. Involved in the first step of peroxisomal beta-oxidation by catalyzing the desaturation of fatty acid-derived side chains of ascaroside pheromones, which regulates development and behavior. Specifically, shortens indol-3-carbonyl(IC)-ascarosides with 7-carbon (IC-asc-C7) or 9-carbon (IC-asc-C9) side chains and contributes to the shortening of ascarosides with 13-carbon (asc-C13) and 15-carbon (asc-C15) side chains. This chain is Acyl-coenzyme A oxidase acox-3, found in Caenorhabditis elegans.